The chain runs to 1620 residues: NAD-specific glutamate dehydrogenase (1620 aa).

Residue lysine 851 is part of the active site.

Belongs to the Glu/Leu/Phe/Val dehydrogenases family. Homotetramer. In terms of processing, contains disulfide bonds (interchain).

It carries out the reaction L-glutamate + NAD(+) + H2O = 2-oxoglutarate + NH4(+) + NADH + H(+). Its activity is regulated as follows. Activity subject to allosteric control by arginine and citrate, which function as positive and negative effectors, respectively. Functionally, involved in arginine catabolism by converting L-glutamate, into 2-oxoglutarate, which is then channeled into the tricarboxylic acid cycle. Can also utilize other amino acids of the glutamate family. In Pseudomonas aeruginosa (strain ATCC 15692 / DSM 22644 / CIP 104116 / JCM 14847 / LMG 12228 / 1C / PRS 101 / PAO1), this protein is NAD-specific glutamate dehydrogenase (gdhB).